The following is a 64-amino-acid chain: Small ribosomal subunit protein eS17 (64 aa).

This sequence belongs to the eukaryotic ribosomal protein eS17 family.

This chain is Small ribosomal subunit protein eS17, found in Methanospirillum hungatei JF-1 (strain ATCC 27890 / DSM 864 / NBRC 100397 / JF-1).